A 94-amino-acid polypeptide reads, in one-letter code: Co-chaperonin GroES (94 aa).

As to quaternary structure, heptamer of 7 subunits arranged in a ring. Interacts with the chaperonin GroEL.

Its subcellular location is the cytoplasm. Together with the chaperonin GroEL, plays an essential role in assisting protein folding. The GroEL-GroES system forms a nano-cage that allows encapsulation of the non-native substrate proteins and provides a physical environment optimized to promote and accelerate protein folding. GroES binds to the apical surface of the GroEL ring, thereby capping the opening of the GroEL channel. This is Co-chaperonin GroES from Thermoanaerobacter brockii (Thermoanaerobium brockii).